A 317-amino-acid chain; its full sequence is Methionyl-tRNA formyltransferase (317 aa).

112-115 serves as a coordination point for (6S)-5,6,7,8-tetrahydrofolate; it reads SLLP.

It belongs to the Fmt family.

The enzyme catalyses L-methionyl-tRNA(fMet) + (6R)-10-formyltetrahydrofolate = N-formyl-L-methionyl-tRNA(fMet) + (6S)-5,6,7,8-tetrahydrofolate + H(+). Attaches a formyl group to the free amino group of methionyl-tRNA(fMet). The formyl group appears to play a dual role in the initiator identity of N-formylmethionyl-tRNA by promoting its recognition by IF2 and preventing the misappropriation of this tRNA by the elongation apparatus. The sequence is that of Methionyl-tRNA formyltransferase from Mycobacterium avium (strain 104).